We begin with the raw amino-acid sequence, 459 residues long: Putrescine aminotransferase (459 aa).

Pyridoxal 5'-phosphate-binding positions include 150 to 151 (GT) and Gln274. Lys300 is modified (N6-(pyridoxal phosphate)lysine). Thr332 is a binding site for pyridoxal 5'-phosphate.

This sequence belongs to the class-III pyridoxal-phosphate-dependent aminotransferase family. Putrescine aminotransferase subfamily. Requires pyridoxal 5'-phosphate as cofactor.

It catalyses the reaction an alkane-alpha,omega-diamine + 2-oxoglutarate = an omega-aminoaldehyde + L-glutamate. The enzyme catalyses putrescine + 2-oxoglutarate = 1-pyrroline + L-glutamate + H2O. The catalysed reaction is cadaverine + 2-oxoglutarate = 5-aminopentanal + L-glutamate. Its pathway is amine and polyamine degradation; putrescine degradation; 4-aminobutanal from putrescine (transaminase route): step 1/1. In terms of biological role, catalyzes the aminotransferase reaction from putrescine to 2-oxoglutarate, leading to glutamate and 4-aminobutanal, which spontaneously cyclizes to form 1-pyrroline. This is the first step in one of two pathways for putrescine degradation, where putrescine is converted into 4-aminobutanoate (gamma-aminobutyrate or GABA) via 4-aminobutanal. Also functions as a cadaverine transaminase in a a L-lysine degradation pathway to succinate that proceeds via cadaverine, glutarate and L-2-hydroxyglutarate. The chain is Putrescine aminotransferase from Shigella flexneri serotype 5b (strain 8401).